A 404-amino-acid polypeptide reads, in one-letter code: Acetate kinase (404 aa).

A Mg(2+)-binding site is contributed by asparagine 8. Lysine 15 is an ATP binding site. Arginine 92 lines the substrate pocket. Catalysis depends on aspartate 149, which acts as the Proton donor/acceptor. ATP contacts are provided by residues 207 to 211 (HLGSG), 282 to 284 (DMR), and 327 to 331 (GIGEN). Glutamate 378 contributes to the Mg(2+) binding site.

It belongs to the acetokinase family. Homodimer. It depends on Mg(2+) as a cofactor. Mn(2+) is required as a cofactor.

It localises to the cytoplasm. It catalyses the reaction acetate + ATP = acetyl phosphate + ADP. It functions in the pathway metabolic intermediate biosynthesis; acetyl-CoA biosynthesis; acetyl-CoA from acetate: step 1/2. Its function is as follows. Catalyzes the formation of acetyl phosphate from acetate and ATP. Can also catalyze the reverse reaction. The protein is Acetate kinase of Nitrobacter hamburgensis (strain DSM 10229 / NCIMB 13809 / X14).